Here is a 378-residue protein sequence, read N- to C-terminus: Anhydro-N-acetylmuramic acid kinase (378 aa).

9 to 16 (GTSADGID) is an ATP binding site.

Belongs to the anhydro-N-acetylmuramic acid kinase family.

It catalyses the reaction 1,6-anhydro-N-acetyl-beta-muramate + ATP + H2O = N-acetyl-D-muramate 6-phosphate + ADP + H(+). It participates in amino-sugar metabolism; 1,6-anhydro-N-acetylmuramate degradation. It functions in the pathway cell wall biogenesis; peptidoglycan recycling. Functionally, catalyzes the specific phosphorylation of 1,6-anhydro-N-acetylmuramic acid (anhMurNAc) with the simultaneous cleavage of the 1,6-anhydro ring, generating MurNAc-6-P. Is required for the utilization of anhMurNAc either imported from the medium or derived from its own cell wall murein, and thus plays a role in cell wall recycling. The sequence is that of Anhydro-N-acetylmuramic acid kinase from Prochlorococcus marinus (strain NATL1A).